The primary structure comprises 86 residues: DNA-directed RNA polymerase subunit Rpo11 (86 aa).

This sequence belongs to the archaeal Rpo11/eukaryotic RPB11/RPC19 RNA polymerase subunit family. In terms of assembly, part of the RNA polymerase complex.

The protein localises to the cytoplasm. It carries out the reaction RNA(n) + a ribonucleoside 5'-triphosphate = RNA(n+1) + diphosphate. Functionally, DNA-dependent RNA polymerase (RNAP) catalyzes the transcription of DNA into RNA using the four ribonucleoside triphosphates as substrates. The protein is DNA-directed RNA polymerase subunit Rpo11 of Archaeoglobus fulgidus (strain ATCC 49558 / DSM 4304 / JCM 9628 / NBRC 100126 / VC-16).